Here is a 261-residue protein sequence, read N- to C-terminus: Claudin-18 (261 aa).

Residues methionine 1–cysteine 6 lie on the Cytoplasmic side of the membrane. Residues glutamine 7–methionine 27 traverse the membrane as a helical segment. The Extracellular portion of the chain corresponds to aspartate 28 to arginine 80. A helical membrane pass occupies residues alanine 81 to leucine 101. The Cytoplasmic portion of the chain corresponds to lysine 102–glycine 122. Residues isoleucine 123 to leucine 143 traverse the membrane as a helical segment. Over valine 144–alanine 173 the chain is Extracellular. The chain crosses the membrane as a helical span at residues alanine 174–isoleucine 194. At alanine 195 to valine 261 the chain is on the cytoplasmic side. The segment at alanine 195–valine 261 is required for role in regulation of RANKL-induced osteoclast differentiation. Phosphoserine is present on serine 214. Residues aspartate 242–valine 261 form a disordered region.

It belongs to the claudin family. In terms of assembly, interacts with TJP2/ZO-2. Interacts with TJP1/ZO-1. Interacts with YAP1 (phosphorylated); the interaction sequesters YAP1 away from the nucleus and thereby restricts transcription of YAP1 target genes. Interacts with CLDN19. As to expression, expressed in the lung (at protein level).

It localises to the cell junction. It is found in the tight junction. The protein localises to the cell membrane. Functionally, involved in alveolar fluid homeostasis via regulation of alveolar epithelial tight junction composition and therefore ion transport and solute permeability, potentially via downstream regulation of the actin cytoskeleton organization and beta-2-adrenergic signaling. Required for lung alveolarization and maintenance of the paracellular alveolar epithelial barrier. Acts to maintain epithelial progenitor cell proliferation and organ size, via regulation of YAP1 localization away from the nucleus and thereby restriction of YAP1 target gene transcription. Acts as a negative regulator of RANKL-induced osteoclast differentiation, potentially via relocation of TJP2/ZO-2 away from the nucleus, subsequently involved in bone resorption in response to calcium deficiency. Mediates the osteoprotective effects of estrogen, potentially via acting downstream of estrogen signaling independently of RANKL signaling pathways. In terms of biological role, required for the formation of the gastric paracellular barrier via its role in tight junction formation, thereby involved in the response to gastric acidification. This Rattus norvegicus (Rat) protein is Claudin-18.